The primary structure comprises 623 residues: DNA-directed RNA polymerase subunit beta' (623 aa).

The Zn(2+) site is built by Cys70, Cys72, Cys85, and Cys88. Asp466, Asp468, and Asp470 together coordinate Mg(2+).

Belongs to the RNA polymerase beta' chain family. RpoC1 subfamily. In terms of assembly, in plastids the minimal PEP RNA polymerase catalytic core is composed of four subunits: alpha, beta, beta', and beta''. When a (nuclear-encoded) sigma factor is associated with the core the holoenzyme is formed, which can initiate transcription. The cofactor is Mg(2+). It depends on Zn(2+) as a cofactor.

Its subcellular location is the plastid. It is found in the chloroplast. The catalysed reaction is RNA(n) + a ribonucleoside 5'-triphosphate = RNA(n+1) + diphosphate. DNA-dependent RNA polymerase catalyzes the transcription of DNA into RNA using the four ribonucleoside triphosphates as substrates. In Rhodomonas salina (Cryptomonas salina), this protein is DNA-directed RNA polymerase subunit beta'.